The chain runs to 84 residues: Small ribosomal subunit protein bS20 (84 aa).

The protein belongs to the bacterial ribosomal protein bS20 family.

Functionally, binds directly to 16S ribosomal RNA. In Limosilactobacillus fermentum (strain NBRC 3956 / LMG 18251) (Lactobacillus fermentum), this protein is Small ribosomal subunit protein bS20.